Here is a 505-residue protein sequence, read N- to C-terminus: Histidine ammonia-lyase (505 aa).

The 5-imidazolinone (Ala-Gly) cross-link spans 141–143; sequence ASG. Residue Ser-142 is modified to 2,3-didehydroalanine (Ser).

The protein belongs to the PAL/histidase family. Post-translationally, contains an active site 4-methylidene-imidazol-5-one (MIO), which is formed autocatalytically by cyclization and dehydration of residues Ala-Ser-Gly.

The protein resides in the cytoplasm. The catalysed reaction is L-histidine = trans-urocanate + NH4(+). Its pathway is amino-acid degradation; L-histidine degradation into L-glutamate; N-formimidoyl-L-glutamate from L-histidine: step 1/3. This Bacillus mycoides (strain KBAB4) (Bacillus weihenstephanensis) protein is Histidine ammonia-lyase.